The following is a 393-amino-acid chain: DNA primase small subunit PriS (393 aa).

Active-site residues include Asp-100, Asp-102, and Asp-296.

The protein belongs to the eukaryotic-type primase small subunit family. As to quaternary structure, heterodimer of a small subunit (PriS) and a large subunit (PriL). Mg(2+) serves as cofactor. It depends on Mn(2+) as a cofactor.

In terms of biological role, catalytic subunit of DNA primase, an RNA polymerase that catalyzes the synthesis of short RNA molecules used as primers for DNA polymerase during DNA replication. The small subunit contains the primase catalytic core and has DNA synthesis activity on its own. Binding to the large subunit stabilizes and modulates the activity, increasing the rate of DNA synthesis while decreasing the length of the DNA fragments, and conferring RNA synthesis capability. The DNA polymerase activity may enable DNA primase to also catalyze primer extension after primer synthesis. May also play a role in DNA repair. In Natronomonas pharaonis (strain ATCC 35678 / DSM 2160 / CIP 103997 / JCM 8858 / NBRC 14720 / NCIMB 2260 / Gabara) (Halobacterium pharaonis), this protein is DNA primase small subunit PriS.